The primary structure comprises 292 residues: MMSTKIDGKQIAAEIKTNLAERVNKLKAQGIQPGLGTLLVGEDPGSMKYVAGKHADCQEVGITSVKKELPADASFDDIAAAVRELNEDPACTGFIVQLPLPKGINENAIIDMIDPAKDADGMHPYNLGELVLHVRGDISTPLPCTPRGVLELLDAYDIDLNGKEVCVLGRGITIGRTIGLMLTRNAVNATVTLCHTGTRDVADHMRRADVIVAAMGSAGFVTPDKIKDGAVLVDVGVSRVYDEEAGRYRIKGDVDKACYDKASAYTPNPGGVGPMTRAMLLANVVEMAERHA.

NADP(+) contacts are provided by residues 169–171, Thr196, and Val237; that span reads GRG.

It belongs to the tetrahydrofolate dehydrogenase/cyclohydrolase family. Homodimer.

It carries out the reaction (6R)-5,10-methylene-5,6,7,8-tetrahydrofolate + NADP(+) = (6R)-5,10-methenyltetrahydrofolate + NADPH. It catalyses the reaction (6R)-5,10-methenyltetrahydrofolate + H2O = (6R)-10-formyltetrahydrofolate + H(+). It functions in the pathway one-carbon metabolism; tetrahydrofolate interconversion. Its function is as follows. Catalyzes the oxidation of 5,10-methylenetetrahydrofolate to 5,10-methenyltetrahydrofolate and then the hydrolysis of 5,10-methenyltetrahydrofolate to 10-formyltetrahydrofolate. The polypeptide is Bifunctional protein FolD (Bifidobacterium longum (strain NCC 2705)).